The following is a 76-amino-acid chain: MARFFRRRKFCRFTAEGVKEIDYKDLNTLKAYVSETGKIVPSRITGTKAKYQRQLATAIKRARYLALLPYTDSHGR.

This sequence belongs to the bacterial ribosomal protein bS18 family. Part of the 30S ribosomal subunit. Forms a tight heterodimer with protein bS6.

In terms of biological role, binds as a heterodimer with protein bS6 to the central domain of the 16S rRNA, where it helps stabilize the platform of the 30S subunit. The protein is Small ribosomal subunit protein bS18 of Pseudomonas aeruginosa (strain LESB58).